Here is a 215-residue protein sequence, read N- to C-terminus: Serine acetyltransferase (215 aa).

This sequence belongs to the transferase hexapeptide repeat family.

It localises to the cytoplasm. It carries out the reaction L-serine + acetyl-CoA = O-acetyl-L-serine + CoA. It functions in the pathway amino-acid biosynthesis; L-cysteine biosynthesis; L-cysteine from L-serine: step 1/2. This chain is Serine acetyltransferase (cysE), found in Staphylococcus aureus (strain MRSA252).